A 623-amino-acid polypeptide reads, in one-letter code: Oviduct-specific glycoprotein (623 aa).

The first 21 residues, 1-21, serve as a signal peptide directing secretion; it reads MWKLLLWVGLVLVLKHHDGAA. The region spanning 22–385 is the GH18 domain; that stretch reads HKLVCYFTNW…YVMNDILVRA (364 aa). Cys-26 and Cys-51 are disulfide-bonded. Residues 71–72, 98–101, Tyr-142, 211–214, and Trp-355 each bind chitin; these read LQ, GGWN, and LSYD. Residues Asn-402 and Asn-441 are each glycosylated (N-linked (GlcNAc...) asparagine). Disordered regions lie at residues 539 to 558 and 594 to 623; these read LTPV…VSPG and RKIS…PQDG. Over residues 613-623 the composition is skewed to polar residues; sequence TSETGTHPQDG.

Belongs to the glycosyl hydrolase 18 family. In terms of tissue distribution, oviduct.

The protein localises to the cytoplasmic vesicle. It localises to the secretory vesicle. Its function is as follows. Binds to oocyte zona pellucida in vivo. May play a role in the fertilization process and/or early embryonic development. In Papio anubis (Olive baboon), this protein is Oviduct-specific glycoprotein (OVGP1).